A 333-amino-acid chain; its full sequence is Protoheme IX farnesyltransferase (333 aa).

A run of 8 helical transmembrane segments spans residues 63 to 83 (LACT…LNCI), 109 to 129 (AAFI…VSGV), 132 to 152 (LAAG…TAIL), 160 to 180 (IVIG…AASG), 188 to 208 (WLFS…ALLL), 214 to 234 (AVGI…RAIS), 245 to 265 (GFGV…LIPF), and 292 to 312 (WSIF…LPMA).

Belongs to the UbiA prenyltransferase family. Protoheme IX farnesyltransferase subfamily.

The protein resides in the cell inner membrane. It catalyses the reaction heme b + (2E,6E)-farnesyl diphosphate + H2O = Fe(II)-heme o + diphosphate. It functions in the pathway porphyrin-containing compound metabolism; heme O biosynthesis; heme O from protoheme: step 1/1. Its function is as follows. Converts heme B (protoheme IX) to heme O by substitution of the vinyl group on carbon 2 of heme B porphyrin ring with a hydroxyethyl farnesyl side group. This Prochlorococcus marinus (strain MIT 9313) protein is Protoheme IX farnesyltransferase.